Reading from the N-terminus, the 136-residue chain is Ribonuclease P protein component (136 aa).

Belongs to the RnpA family. Consists of a catalytic RNA component (M1 or rnpB) and a protein subunit.

The catalysed reaction is Endonucleolytic cleavage of RNA, removing 5'-extranucleotides from tRNA precursor.. RNaseP catalyzes the removal of the 5'-leader sequence from pre-tRNA to produce the mature 5'-terminus. It can also cleave other RNA substrates such as 4.5S RNA. The protein component plays an auxiliary but essential role in vivo by binding to the 5'-leader sequence and broadening the substrate specificity of the ribozyme. The polypeptide is Ribonuclease P protein component (Burkholderia pseudomallei (strain 1106a)).